A 922-amino-acid chain; its full sequence is Histidine kinase 5 (922 aa).

2 coiled-coil regions span residues 86-120 and 169-205; these read MQDN…EEYK and KQKA…SQSA. The Histidine kinase domain occupies 373–614; it reads TMSHEIRSPL…TFTFILPYKV (242 aa). His376 carries the post-translational modification Phosphohistidine; by autocatalysis. 2 disordered regions span residues 620–639 and 728–773; these read YSDD…EPDD and NGRC…TEVK. Residues 738–747 are compositionally biased toward low complexity; that stretch reads SCSSSQASSE. The segment covering 761–773 has biased composition (basic and acidic residues); the sequence is SHREEEKAETEVK. The region spanning 779–921 is the Response regulatory domain; it reads KILLVEDNKI…KLRECLQQYL (143 aa). Residues Asp785, Asp828, and Cys830 each contribute to the Mg(2+) site. Asp828 carries the post-translational modification 4-aspartylphosphate.

Interacts with AHP1, APH2, APH3, APH5 and APH6, but not with APH4. Present in light-grown but not in etiolated seedlings. Mostly expressed in roots flowers and siliques, and, to a lower extent, in stems and leaves, especially in guard cells.

The protein localises to the cell membrane. It localises to the cytoplasm. It carries out the reaction ATP + protein L-histidine = ADP + protein N-phospho-L-histidine.. In terms of biological role, functions as a histidine kinase and transmits the stress signal to a downstream MAPK cascade. This protein undergoes an ATP-dependent autophosphorylation at a conserved histidine residue in the kinase core, and a phosphoryl group is then transferred to a conserved aspartate residue in the receiver domain. Negative regulator of the ETR1-dependent abscisic acid (ABA) and ethylene signaling pathway that inhibits the root elongation. Promotes stomatal closure. Regulates stomatal opening by integrating multiple signals via hydrogen peroxide H(2)O(2) homeostasis in guard cells in an ABA-independent manner. May contribute to basal defense mechanisms by closing stomata in the presence of bacterial pathogens. Regulates both hormone levels and ROS production in response to stress. Required for full immunity to bacterial pathogen and necrotrophic fungus. The chain is Histidine kinase 5 (AHK5) from Arabidopsis thaliana (Mouse-ear cress).